Here is a 584-residue protein sequence, read N- to C-terminus: MARPSPLCLLLLLTLLPPIVPSNSLLTEPPFRWRFYLHETWTQGNRLSTVTLATVDCQPHGCQAQVTFNFTSFKSVLRGWSNPTIGFVYDQTHSNCRDYWVDTNGGCPYAYCRMHVTQLDTAKKVQHTYRLTSDGRTTYFLTIPDPWDSRWVSGVTGRLYRWPTDSYPVGKLRIFLTYIRVIPQVLSNLQDQADNIKHQEEVINTLVQSHPKADMVTYDDKAEAGLFSWITLVRHGARLVNMAGLVNLSHCFLCTALSQPPLVAVPLPQAFNTSGNHTAHPSGVFSEQVPLFRDPLQPQFPFCYTTPNSSWCNQTYSGSLSNLSAPAGGYFWCNFTLTKHLNISSNNTLSRNLCLPISLVPRLTLYSEAELSSLVNPPMRQKRAVFPPLVIGVSLTSSLVASGLGTGAIVHFISSSQDLSIKLQMAIEASAESLASLQRQITSVAKVAMQNRRALDLLTADKGGTCMFLGEECCYYINESGLVETSLLTLDKIRDGLHRPSSTPNYGGGWWQSPLTTWIIPFISPILIICLLLLIAPCVLKFIKNRISEVSRVTVNQMLLHPYSRLPTSEDHYDVALTQQEAAR.

Positions 1-22 are cleaved as a signal peptide; that stretch reads MARPSPLCLLLLLTLLPPIVPS. Residues 23–514 lie on the Extracellular side of the membrane; it reads NSLLTEPPFR…NYGGGWWQSP (492 aa). N-linked (GlcNAc...) asparagine glycosylation is found at Asn-69 and Asn-247. Residues 251-254 carry the CXXC motif; that stretch reads CFLC. N-linked (GlcNAc...) asparagine glycans are attached at residues Asn-272, Asn-276, Asn-308, Asn-313, Asn-322, Asn-334, Asn-342, and Asn-346. The tract at residues 388-413 is fusion peptide; that stretch reads PLVIGVSLTSSLVASGLGTGAIVHFI. The CKS-17 signature appears at 449-465; it reads MQNRRALDLLTADKGGT. A disulfide bridge connects residues Cys-466 and Cys-473. The CX6CC motif lies at 466-474; it reads CMFLGEECC. The N-linked (GlcNAc...) asparagine glycan is linked to Asn-478. A helical transmembrane segment spans residues 515–540; sequence LTTWIIPFISPILIICLLLLIAPCVL. At 541–584 the chain is on the cytoplasmic side; that stretch reads KFIKNRISEVSRVTVNQMLLHPYSRLPTSEDHYDVALTQQEAAR.

The protein belongs to the gamma type-C retroviral envelope protein family. HERV class-I F(c)1 env subfamily. The surface (SU) and transmembrane (TM) proteins form a heterodimer. SU and TM are attached by noncovalent interactions or by a labile interchain disulfide bond. Specific enzymatic cleavages in vivo yield the mature SU and TM proteins. Post-translationally, the CXXC motif is highly conserved across a broad range of retroviral envelope proteins. It is thought to participate in the formation of a labile disulfide bond possibly with the CX6CC motif present in the transmembrane protein.

The protein localises to the virion. It localises to the cell membrane. Retroviral envelope proteins mediate receptor recognition and membrane fusion during early infection. Endogenous envelope proteins may have kept, lost or modified their original function during evolution. This endogenous envelope protein has lost its original fusogenic properties. Its function is as follows. SU mediates receptor recognition. Functionally, TM anchors the envelope heterodimer to the viral membrane through one transmembrane domain. The other hydrophobic domain, called fusion peptide, mediates fusion of the viral membrane with the target cell membrane. The chain is Endogenous retrovirus group FC1 Env polyprotein (ERVFC1) from Pan troglodytes (Chimpanzee).